The chain runs to 339 residues: MTVQWQEQVSLKPYNTFGIDVKARYFSQVQDDQQVRQALGQAQQRGLPVLVIGGGSNLLLTRDIDALVLHMASRGRRVLSDDGERIVVEAEAGEPWHAFVQWTLAQGYCGLENLSLIPGTVGAAPMQNVGAYGVEIKDVFAGLTALDRETGELRDFSLAECAFGYRDSLFKRNPGRWLILRVRFALTRTLHAHLDYGPVRQRLSERGVTELTAQAISDAICSIRREKLPDPAELGNAGSFFKNPVVTADLVERIRAQYPGVVAYPQADGQVKLAAGWLIEQAGWKGHREGDAGVHRLQSLVLVNYGQASGAQMHALARKIQADIFERFGVELEMEPNLY.

Residues 18 to 189 (GIDVKARYFS…LRVRFALTRT (172 aa)) form the FAD-binding PCMH-type domain. R166 is a catalytic residue. Catalysis depends on S239, which acts as the Proton donor. E335 is an active-site residue.

Belongs to the MurB family. The cofactor is FAD.

Its subcellular location is the cytoplasm. It catalyses the reaction UDP-N-acetyl-alpha-D-muramate + NADP(+) = UDP-N-acetyl-3-O-(1-carboxyvinyl)-alpha-D-glucosamine + NADPH + H(+). It participates in cell wall biogenesis; peptidoglycan biosynthesis. Its function is as follows. Cell wall formation. This Pseudomonas putida (strain ATCC 47054 / DSM 6125 / CFBP 8728 / NCIMB 11950 / KT2440) protein is UDP-N-acetylenolpyruvoylglucosamine reductase.